We begin with the raw amino-acid sequence, 792 residues long: G-type lectin S-receptor-like serine/threonine-protein kinase At1g61440 (792 aa).

An N-terminal signal peptide occupies residues 1-17; the sequence is MGKKRIVLLLFISFSYA. One can recognise a Bulb-type lectin domain in the interval 18 to 137; sequence EITKESPLSI…VTGRTLWESF (120 aa). At 18 to 419 the chain is on the extracellular side; that stretch reads EITKESPLSI…ELDVHKRKMT (402 aa). Asn-46, Asn-127, and Asn-229 each carry an N-linked (GlcNAc...) asparagine glycan. Residues 271 to 307 enclose the EGF-like; atypical domain; it reads PANSCDIYGVCGPFGFCVISDPPKCKCFKGFVPKSIE. Intrachain disulfides connect Cys-275–Cys-287 and Cys-281–Cys-295. Residues Asn-313, Asn-329, and Asn-368 are each glycosylated (N-linked (GlcNAc...) asparagine). In terms of domain architecture, PAN spans 326 to 408; sequence CQGNSTGKDA…GEILSIRLAH (83 aa). Intrachain disulfides connect Cys-361-Cys-382 and Cys-365-Cys-371. Residues 420 to 440 traverse the membrane as a helical segment; sequence IVASTVSLTLFVILGFATFGF. Residues 441 to 792 are Cytoplasmic-facing; it reads WRNRVKHHDA…EMTESVILGR (352 aa). The 286-residue stretch at 478–763 folds into the Protein kinase domain; it reads FSLSNKLGHG…DLPLPKQPTF (286 aa). Residues 484-492 and Lys-506 each bind ATP; that span reads LGHGGFGSV. Phosphoserine is present on residues Ser-512 and Ser-527. Positions 567-584 are caM-binding; sequence RKRLELDWPKRFDIIQGI. Asp-603 acts as the Proton acceptor in catalysis. Ser-607 and Ser-620 each carry phosphoserine. Position 637 is a phosphothreonine (Thr-637). Phosphoserine occurs at positions 680 and 774.

This sequence belongs to the protein kinase superfamily. Ser/Thr protein kinase family.

The protein localises to the cell membrane. The enzyme catalyses L-seryl-[protein] + ATP = O-phospho-L-seryl-[protein] + ADP + H(+). The catalysed reaction is L-threonyl-[protein] + ATP = O-phospho-L-threonyl-[protein] + ADP + H(+). The chain is G-type lectin S-receptor-like serine/threonine-protein kinase At1g61440 from Arabidopsis thaliana (Mouse-ear cress).